The chain runs to 269 residues: Hydroxyethylthiazole kinase (269 aa).

Met-45 provides a ligand contact to substrate. Arg-121 and Thr-167 together coordinate ATP. Gly-194 provides a ligand contact to substrate.

The protein belongs to the Thz kinase family. Mg(2+) is required as a cofactor.

It carries out the reaction 5-(2-hydroxyethyl)-4-methylthiazole + ATP = 4-methyl-5-(2-phosphooxyethyl)-thiazole + ADP + H(+). It functions in the pathway cofactor biosynthesis; thiamine diphosphate biosynthesis; 4-methyl-5-(2-phosphoethyl)-thiazole from 5-(2-hydroxyethyl)-4-methylthiazole: step 1/1. Functionally, catalyzes the phosphorylation of the hydroxyl group of 4-methyl-5-beta-hydroxyethylthiazole (THZ). This Bacillus cereus (strain ATCC 14579 / DSM 31 / CCUG 7414 / JCM 2152 / NBRC 15305 / NCIMB 9373 / NCTC 2599 / NRRL B-3711) protein is Hydroxyethylthiazole kinase.